A 321-amino-acid chain; its full sequence is Ubiquinone biosynthesis O-methyltransferase, mitochondrial (321 aa).

Residues Arg-102, Gly-135, Asp-157, and Leu-210 each coordinate S-adenosyl-L-methionine. Mg(2+) is bound by residues Glu-211, Glu-214, and His-215.

Belongs to the class I-like SAM-binding methyltransferase superfamily. UbiG/COQ3 family. In terms of assembly, component of a multi-subunit COQ enzyme complex. The cofactor is Mg(2+).

It is found in the mitochondrion inner membrane. It carries out the reaction a 3,4-dihydroxy-5-(all-trans-polyprenyl)benzoate + S-adenosyl-L-methionine = a 4-hydroxy-3-methoxy-5-(all-trans-polyprenyl)benzoate + S-adenosyl-L-homocysteine + H(+). The enzyme catalyses a 3-demethylubiquinone + S-adenosyl-L-methionine = a ubiquinone + S-adenosyl-L-homocysteine. It catalyses the reaction a 3-demethylubiquinol + S-adenosyl-L-methionine = a ubiquinol + S-adenosyl-L-homocysteine + H(+). Its pathway is cofactor biosynthesis; ubiquinone biosynthesis. In terms of biological role, O-methyltransferase required for two non-consecutive steps during ubiquinone biosynthesis. Catalyzes the 2 O-methylation of 3,4-dihydroxy-5-(all-trans-polyprenyl)benzoic acid into 4-hydroxy-3-methoxy-5-(all-trans-polyprenyl)benzoic acid. Also catalyzes the last step of ubiquinone biosynthesis by mediating methylation of 3-demethylubiquinone into ubiquinone. Also able to mediate the methylation of 3-demethylubiquinol into ubiquinol. The chain is Ubiquinone biosynthesis O-methyltransferase, mitochondrial from Dictyostelium discoideum (Social amoeba).